The chain runs to 627 residues: (-)-alpha-terpineol synthase, chloroplastic (627 aa).

The transit peptide at 1-52 directs the protein to the chloroplast; sequence MDLISVLPSASKSCVCLHKPLSSSTHKLKPFCKTIRILVMPRRWEFARPSMS. Residues Asp378, Asp382, and Asp530 each coordinate Mg(2+). Positions 378 to 382 match the DDXXD motif motif; the sequence is DDMYD.

This sequence belongs to the terpene synthase family. Tpsd subfamily. Mg(2+) serves as cofactor. It depends on Mn(2+) as a cofactor.

It localises to the plastid. The protein localises to the chloroplast. The catalysed reaction is (2E)-geranyl diphosphate + H2O = (S)-alpha-terpineol + diphosphate. Its pathway is terpene metabolism; oleoresin biosynthesis. Involved in defensive oleoresin formation in conifers in response to insect attack or other injury. Involved in monoterpene (C10) olefins biosynthesis. Produces 57.3% alpha-terpineol (15.1% (+)/84.9% (-)), 27.6% limonene (25.2% (+)/74.8% (-)), 8% terpinolene, 4.7% beta-pinene (14.8% (+)/85.2% (-)), 1.3% alpha-pinene (100% (+)) and 1.1% myrcene. The chain is (-)-alpha-terpineol synthase, chloroplastic (PT10) from Pinus taeda (Loblolly pine).